We begin with the raw amino-acid sequence, 361 residues long: uncharacterized protein (361 aa).

An N-terminal signal peptide occupies residues 1 to 19 (MNLVICVLLLSIWKNNCMT). Topologically, residues 20–47 (TNQTNGSSTTGDKPVESMQTKLNYLRRN) are extracellular. The N-linked (GlcNAc...) asparagine glycan is linked to Asn24. A helical membrane pass occupies residues 48–68 (LLILVGIIIMVFVFICFCYLH). Topologically, residues 69-361 (YNCLSDDASK…QVTSEVTLND (293 aa)) are cytoplasmic. Over residues 99 to 113 (AKTASQCSPETQPML) the composition is skewed to polar residues. 3 disordered regions span residues 99 to 184 (AKTA…KAHK), 209 to 247 (PPQL…NPKR), and 295 to 316 (QNLH…LDSR). Residues 114-133 (STADKSSDSSSPERASAQSS) are compositionally biased toward low complexity. Over residues 141–150 (SSLQKPSIPN) the composition is skewed to polar residues. The span at 299 to 308 (VSSKVKSSSR) shows a compositional bias: low complexity.

Its subcellular location is the membrane. This is an uncharacterized protein from Homo sapiens (Human).